We begin with the raw amino-acid sequence, 449 residues long: Phosphoglucosamine mutase (449 aa).

Ser104 functions as the Phosphoserine intermediate in the catalytic mechanism. Ser104, Asp243, Asp245, and Asp247 together coordinate Mg(2+). Residue Ser104 is modified to Phosphoserine.

The protein belongs to the phosphohexose mutase family. Mg(2+) is required as a cofactor. Activated by phosphorylation.

The catalysed reaction is alpha-D-glucosamine 1-phosphate = D-glucosamine 6-phosphate. Functionally, catalyzes the conversion of glucosamine-6-phosphate to glucosamine-1-phosphate. The sequence is that of Phosphoglucosamine mutase from Xanthomonas axonopodis pv. citri (strain 306).